The following is a 550-amino-acid chain: Dihydroxy-acid dehydratase (550 aa).

Aspartate 78 serves as a coordination point for Mg(2+). Residue cysteine 119 participates in [2Fe-2S] cluster binding. 2 residues coordinate Mg(2+): aspartate 120 and lysine 121. Lysine 121 carries the N6-carboxylysine modification. Cysteine 191 provides a ligand contact to [2Fe-2S] cluster. Glutamate 440 is a Mg(2+) binding site. Serine 466 functions as the Proton acceptor in the catalytic mechanism.

This sequence belongs to the IlvD/Edd family. In terms of assembly, homodimer. It depends on [2Fe-2S] cluster as a cofactor. Requires Mg(2+) as cofactor.

It carries out the reaction (2R)-2,3-dihydroxy-3-methylbutanoate = 3-methyl-2-oxobutanoate + H2O. The catalysed reaction is (2R,3R)-2,3-dihydroxy-3-methylpentanoate = (S)-3-methyl-2-oxopentanoate + H2O. It participates in amino-acid biosynthesis; L-isoleucine biosynthesis; L-isoleucine from 2-oxobutanoate: step 3/4. Its pathway is amino-acid biosynthesis; L-valine biosynthesis; L-valine from pyruvate: step 3/4. Its function is as follows. Functions in the biosynthesis of branched-chain amino acids. Catalyzes the dehydration of (2R,3R)-2,3-dihydroxy-3-methylpentanoate (2,3-dihydroxy-3-methylvalerate) into 2-oxo-3-methylpentanoate (2-oxo-3-methylvalerate) and of (2R)-2,3-dihydroxy-3-methylbutanoate (2,3-dihydroxyisovalerate) into 2-oxo-3-methylbutanoate (2-oxoisovalerate), the penultimate precursor to L-isoleucine and L-valine, respectively. The polypeptide is Dihydroxy-acid dehydratase (Methanococcus aeolicus (strain ATCC BAA-1280 / DSM 17508 / OCM 812 / Nankai-3)).